Reading from the N-terminus, the 472-residue chain is ATP synthase subunit beta (472 aa).

160–167 is an ATP binding site; sequence GGAGVGKT.

This sequence belongs to the ATPase alpha/beta chains family. In terms of assembly, F-type ATPases have 2 components, CF(1) - the catalytic core - and CF(0) - the membrane proton channel. CF(1) has five subunits: alpha(3), beta(3), gamma(1), delta(1), epsilon(1). CF(0) has three main subunits: a(1), b(2) and c(9-12). The alpha and beta chains form an alternating ring which encloses part of the gamma chain. CF(1) is attached to CF(0) by a central stalk formed by the gamma and epsilon chains, while a peripheral stalk is formed by the delta and b chains.

Its subcellular location is the cell membrane. It catalyses the reaction ATP + H2O + 4 H(+)(in) = ADP + phosphate + 5 H(+)(out). Functionally, produces ATP from ADP in the presence of a proton gradient across the membrane. The catalytic sites are hosted primarily by the beta subunits. The protein is ATP synthase subunit beta of Lachnoclostridium phytofermentans (strain ATCC 700394 / DSM 18823 / ISDg) (Clostridium phytofermentans).